The sequence spans 508 residues: Tyrosine decarboxylase 4 (508 aa).

Lys318 is modified (N6-(pyridoxal phosphate)lysine).

Belongs to the group II decarboxylase family. As to quaternary structure, homodimer. Requires pyridoxal 5'-phosphate as cofactor.

The enzyme catalyses L-tyrosine + H(+) = tyramine + CO2. This Petroselinum crispum (Parsley) protein is Tyrosine decarboxylase 4 (TYRDC-4).